The sequence spans 93 residues: Small ribosomal subunit protein uS19 (93 aa).

This sequence belongs to the universal ribosomal protein uS19 family.

In terms of biological role, protein S19 forms a complex with S13 that binds strongly to the 16S ribosomal RNA. This is Small ribosomal subunit protein uS19 from Wolinella succinogenes (strain ATCC 29543 / DSM 1740 / CCUG 13145 / JCM 31913 / LMG 7466 / NCTC 11488 / FDC 602W) (Vibrio succinogenes).